Here is a 295-residue protein sequence, read N- to C-terminus: Glycine N-methyltransferase (295 aa).

(6S)-5-methyl-5,6,7,8-tetrahydrofolate contacts are provided by Ser4 and Tyr6. Ser10 bears the Phosphoserine mark. S-adenosyl-L-methionine-binding residues include Tyr22, Trp31, Tyr34, and Arg41. Tyr34 is modified (phosphotyrosine). The residue at position 46 (Lys46) is an N6-succinyllysine. Residues Ala65, 86–88 (DAS), 117–118 (NW), 139–142 (LGNS), and Arg178 contribute to the S-adenosyl-L-methionine site. An N6-succinyllysine mark is found at Lys193, Lys198, and Lys203. His217 contributes to the (6S)-5-methyl-5,6,7,8-tetrahydrofolate binding site. Tyr223 contacts S-adenosyl-L-methionine. Arg242 is a (6S)-5-methyl-5,6,7,8-tetrahydrofolate binding site.

The protein belongs to the class I-like SAM-binding methyltransferase superfamily. Glycine N-methyltransferase family. As to quaternary structure, homotetramer. As to expression, abundant in liver.

It is found in the cytoplasm. The enzyme catalyses glycine + S-adenosyl-L-methionine = sarcosine + S-adenosyl-L-homocysteine + H(+). Its activity is regulated as follows. Inhibited by 5-methyltetrahydrofolate monoglutamate and by 5-methyltetrahydrofolate pentaglutamate, inhibition is much more effective by the pentaglutamate form than by the monoglutamate form. Two molecules of 5-methyltetrahydrofolate are bound per tetramer. The binding sites are localized between subunits. Inhibitor binding may preclude movements of the polypeptide chain that are necessary for enzyme activity. In terms of biological role, catalyzes the methylation of glycine by using S-adenosylmethionine (AdoMet) to form N-methylglycine (sarcosine) with the concomitant production of S-adenosylhomocysteine (AdoHcy), a reaction regulated by the binding of 5-methyltetrahydrofolate. Plays an important role in the regulation of methyl group metabolism by regulating the ratio between S-adenosyl-L-methionine and S-adenosyl-L-homocysteine. This Oryctolagus cuniculus (Rabbit) protein is Glycine N-methyltransferase (GNMT).